We begin with the raw amino-acid sequence, 282 residues long: NAC domain-containing protein 1 (282 aa).

The NAC domain maps to Leu9–Lys161. Residues Val106–Thr167 mediate DNA binding. Residues Lys161–Asn188 are a coiled coil.

As to expression, expressed in roots, stem, flowers, and leaves.

The protein resides in the nucleus. Transcription factor that binds DNA motifs 5'-CGT[AG](5N)NACG[ACT][AC][AT][ACG][ACT]-3' and 5'-CACG[ACT][AC][AT][AGT][CT]-3' in target genes promoters. Promotes leaf senescence and reduces fruit yield and sugar content, probably by establishing abscisic acid (ABA) homeostasis. This Solanum lycopersicum (Tomato) protein is NAC domain-containing protein 1.